We begin with the raw amino-acid sequence, 400 residues long: Phosphoglycerate kinase (400 aa).

Substrate contacts are provided by residues 19-21, R38, 61-64, R124, and R161; these read DLN and HLGR. ATP contacts are provided by residues K211, G299, E330, and 356–359; that span reads GGDS.

This sequence belongs to the phosphoglycerate kinase family. Monomer.

The protein localises to the cytoplasm. It carries out the reaction (2R)-3-phosphoglycerate + ATP = (2R)-3-phospho-glyceroyl phosphate + ADP. It participates in carbohydrate degradation; glycolysis; pyruvate from D-glyceraldehyde 3-phosphate: step 2/5. The sequence is that of Phosphoglycerate kinase from Frankia alni (strain DSM 45986 / CECT 9034 / ACN14a).